The primary structure comprises 207 residues: Porin MspD (207 aa).

A signal peptide spans 1 to 24 (MRYLVMMFALLVSVTLVSPRPANA).

The protein belongs to the mycobacterial porin (TC 1.B.24) family. As to quaternary structure, octamers. Probably forms a goblet with the wide end on the exterior of the outer membrane and a central channel. It is not known if mixed oligomers of MspD with other Msp subunits form in vivo.

It localises to the cell outer membrane. Its subcellular location is the secreted. It is found in the cell wall. A backup porin induced when MspA, the major porin, is deleted. It probably forms a water-filled channel which favors the permeation of cations. There are about 2400 porins in wild-type, 800 in an mspA deletion and 150 in a double mspA-mspC deletion. In Mycolicibacterium smegmatis (strain ATCC 700084 / mc(2)155) (Mycobacterium smegmatis), this protein is Porin MspD (mspD).